The primary structure comprises 528 residues: Peptide chain release factor 3 (528 aa).

Positions 9–280 constitute a tr-type G domain; it reads RRRRTFAIIS…LKLAPAPAPR (272 aa). Residues 18–25, 86–90, and 140–143 each bind GTP; these read SHPDAGKT, DTPGH, and NKLD.

The protein belongs to the TRAFAC class translation factor GTPase superfamily. Classic translation factor GTPase family. PrfC subfamily.

It is found in the cytoplasm. Increases the formation of ribosomal termination complexes and stimulates activities of RF-1 and RF-2. It binds guanine nucleotides and has strong preference for UGA stop codons. It may interact directly with the ribosome. The stimulation of RF-1 and RF-2 is significantly reduced by GTP and GDP, but not by GMP. The polypeptide is Peptide chain release factor 3 (Symbiobacterium thermophilum (strain DSM 24528 / JCM 14929 / IAM 14863 / T)).